Reading from the N-terminus, the 373-residue chain is Sorting nexin-21 (373 aa).

The disordered stretch occupies residues 1 to 107 (MHRGTQEGAM…RSPPPDGQWG (107 aa)). A compositionally biased stretch (low complexity) spans 21-37 (ALAGDGPGEAAASPEAE). A compositionally biased stretch (polar residues) spans 55–65 (SRLSGTLSFTS). The segment covering 66–81 (AEDDEDDEDEDDEEAG) has biased composition (acidic residues). The 118-residue stretch at 129–246 (QRLLFEVTSA…DFFVLPELRR (118 aa)) folds into the PX domain. Positions 171, 173, 198, and 212 each coordinate a 1,2-diacyl-sn-glycero-3-phospho-(1D-myo-inositol-3-phosphate).

It belongs to the sorting nexin family. In terms of assembly, monomer. In terms of tissue distribution, highly expressed in fetus liver, but only weakly expressed in brain, skeleton muscle, smooth muscle, and cardiac muscle, kidney, and adrenal gland.

It is found in the cytoplasmic vesicle membrane. It localises to the early endosome membrane. In terms of biological role, binds to membranes enriched in phosphatidylinositol 3-phosphate (PtdIns(P3)) and phosphatidylinositol 4,5-bisphosphate. May be involved in several stages of intracellular trafficking. The protein is Sorting nexin-21 (SNX21) of Homo sapiens (Human).